The chain runs to 366 residues: MPRPILATVHTAALRHNLDRARRAAVDARVWAVVKANAYGHGIERVYEGLRGADGFALLDLAEAERVRALGWRGPVLLLEGVFDARDLELCSRLDLWHTVHCDEQIDMLAAHKTLKPQRVFLKMNSGMNRLGFAPERFGSAWTRLNALPQVDEISLMTHFSDADGARGIAHQLEVFERATHDLLGERSIANSAATLRHARQTRGDWVRPGIVLYGSAPDFPEHDAAHWQLQPTMTLSTKLIGIQTLKAGDTIGYGSNFTAEGPLTIGVAAVGYADGYPRHCNTGTPVLVNGVRTRMVGRVSMDMITVDLTPVPEAKFGTEVTLWGRSAVSGAVLPIDEVAQAAGTVGYELMCAVAPRVPFAPADGE.

Lys35 acts as the Proton acceptor; specific for D-alanine in catalysis. Lys35 bears the N6-(pyridoxal phosphate)lysine mark. Arg130 provides a ligand contact to substrate. The active-site Proton acceptor; specific for L-alanine is Tyr254. Met302 is a substrate binding site.

This sequence belongs to the alanine racemase family. Requires pyridoxal 5'-phosphate as cofactor.

It catalyses the reaction L-alanine = D-alanine. It participates in amino-acid biosynthesis; D-alanine biosynthesis; D-alanine from L-alanine: step 1/1. Its function is as follows. Catalyzes the interconversion of L-alanine and D-alanine. May also act on other amino acids. The chain is Alanine racemase (alr) from Variovorax paradoxus (strain S110).